A 483-amino-acid chain; its full sequence is Cobyric acid synthase (483 aa).

The 188-residue stretch at 251-438 folds into the GATase cobBQ-type domain; the sequence is ALIVAVPMLP…LHGVFSADRF (188 aa). The active-site Nucleophile is cysteine 333. Histidine 430 is an active-site residue.

This sequence belongs to the CobB/CobQ family. CobQ subfamily.

It functions in the pathway cofactor biosynthesis; adenosylcobalamin biosynthesis. Its function is as follows. Catalyzes amidations at positions B, D, E, and G on adenosylcobyrinic A,C-diamide. NH(2) groups are provided by glutamine, and one molecule of ATP is hydrogenolyzed for each amidation. The polypeptide is Cobyric acid synthase (Brucella canis (strain ATCC 23365 / NCTC 10854 / RM-666)).